Reading from the N-terminus, the 162-residue chain is Peptide deformylase-like (162 aa).

The protein belongs to the polypeptide deformylase family.

The polypeptide is Peptide deformylase-like (Staphylococcus aureus (strain MRSA252)).